Consider the following 231-residue polypeptide: 5'-methylthioadenosine/S-adenosylhomocysteine nucleosidase (231 aa).

Glutamate 12 functions as the Proton acceptor in the catalytic mechanism. Residues glycine 78, valine 153, and 174–175 contribute to the substrate site; that span reads ME. Aspartate 198 acts as the Proton donor in catalysis.

This sequence belongs to the PNP/UDP phosphorylase family. MtnN subfamily.

It carries out the reaction S-adenosyl-L-homocysteine + H2O = S-(5-deoxy-D-ribos-5-yl)-L-homocysteine + adenine. It catalyses the reaction S-methyl-5'-thioadenosine + H2O = 5-(methylsulfanyl)-D-ribose + adenine. The catalysed reaction is 5'-deoxyadenosine + H2O = 5-deoxy-D-ribose + adenine. The protein operates within amino-acid biosynthesis; L-methionine biosynthesis via salvage pathway; S-methyl-5-thio-alpha-D-ribose 1-phosphate from S-methyl-5'-thioadenosine (hydrolase route): step 1/2. In terms of biological role, catalyzes the irreversible cleavage of the glycosidic bond in both 5'-methylthioadenosine (MTA) and S-adenosylhomocysteine (SAH/AdoHcy) to adenine and the corresponding thioribose, 5'-methylthioribose and S-ribosylhomocysteine, respectively. Also cleaves 5'-deoxyadenosine, a toxic by-product of radical S-adenosylmethionine (SAM) enzymes, into 5-deoxyribose and adenine. The chain is 5'-methylthioadenosine/S-adenosylhomocysteine nucleosidase from Vibrio cholerae serotype O1 (strain ATCC 39315 / El Tor Inaba N16961).